Here is a 157-residue protein sequence, read N- to C-terminus: Class-10 pathogenesis-related protein 1 (157 aa).

Belongs to the BetVI family. As to expression, high levels in roots and not detectable in hypocotyls, cotyledons, stems, leaves and flower buds of untreated plants. After induction, high levels are present in the vascular bundles of leaves.

Its subcellular location is the cytoplasm. This is Class-10 pathogenesis-related protein 1 (MSPR10-1) from Medicago sativa (Alfalfa).